Consider the following 506-residue polypeptide: Maturase K (506 aa).

It belongs to the intron maturase 2 family. MatK subfamily.

It localises to the plastid. The protein resides in the chloroplast. Functionally, usually encoded in the trnK tRNA gene intron. Probably assists in splicing its own and other chloroplast group II introns. This Jasminum nudiflorum (Winter jasmine) protein is Maturase K.